Consider the following 625-residue polypeptide: TRAF3-interacting protein 1 (625 aa).

The tract at residues 1–322 (MNAAVVRRTQ…RKLSDGSFKD (322 aa)) is abolishes microtubules binding when missing. The tract at residues 130–439 (AGDKGDSRGR…DSQNSDNEDD (310 aa)) is disordered. Over residues 141–152 (QRTSKAQEPNNK) the composition is skewed to polar residues. A compositionally biased stretch (basic and acidic residues) spans 153–327 (SGKEEESRIH…GSFKDVKAEM (175 aa)). The segment at 229–625 (RAKDRDRNNR…VHSINLSSRR (397 aa)) is DISC1-interaction domain. Residues Ser-316 and Ser-409 each carry the phosphoserine modification. Over residues 420 to 434 (SGKTVSSVIIDSQNS) the composition is skewed to polar residues. Positions 472 to 600 (GLVKKILETK…IRDQQDKICA (129 aa)) form a coiled coil.

Belongs to the TRAF3IP1 family. In terms of assembly, interacts with IL13RA1. Binds to microtubules, TRAF3 and DISC1. Component of the IFT complex B, at least composed of IFT20, IFT22, IFT25, IFT27, IFT46, IFT52, TRAF3IP1/IFT54, IFT57, IFT74, IFT80, IFT81, and IFT88. Interacts with IFT88. Interacts with MAP4.

Its subcellular location is the cytoplasm. It localises to the cytoskeleton. The protein resides in the cell projection. The protein localises to the cilium. It is found in the cilium axoneme. Its subcellular location is the cilium basal body. Functionally, plays an inhibitory role on IL13 signaling by binding to IL13RA1. Involved in suppression of IL13-induced STAT6 phosphorylation, transcriptional activity and DNA-binding. Recruits TRAF3 and DISC1 to the microtubules. Involved in epithelial morphogenesis and in the regulation of microtubule cytoskeleton organization. Is a negative regulator of microtubule stability, acting through the control of MAP4 levels. Involved in ciliogenesis. In Mus musculus (Mouse), this protein is TRAF3-interacting protein 1 (Traf3ip1).